The primary structure comprises 252 residues: Indole-3-glycerol phosphate synthase (252 aa).

The protein belongs to the TrpC family.

It catalyses the reaction 1-(2-carboxyphenylamino)-1-deoxy-D-ribulose 5-phosphate + H(+) = (1S,2R)-1-C-(indol-3-yl)glycerol 3-phosphate + CO2 + H2O. It participates in amino-acid biosynthesis; L-tryptophan biosynthesis; L-tryptophan from chorismate: step 4/5. The protein is Indole-3-glycerol phosphate synthase of Listeria monocytogenes serotype 4a (strain HCC23).